We begin with the raw amino-acid sequence, 282 residues long: MAAVVFSLRRSGPVLRLSGALQVSRGAQTAAAPASQAAARIKKFAIYRWDPDKPGDKPRMQTYEVDLNTCGPMVLDALIKIKNEVDPTLTFRRSCREGICGSCAMNINGGNTLACTVRIDTNLSKVSKIYPLPHMYVVKDLVPDLSNFYAQYKSIEPYLKKKDKSQQGKEQYLQSIEDRDKLDGLYECILCACCSTSCPSYWWNADKYLGPAVLMQAYRWMIDSRDDFTEERLSKLQDPFSLYRCHTIMNCTRTCPKGLNPGKAIAEIKKMMAMYKERAVSA.

The transit peptide at 1 to 26 (MAAVVFSLRRSGPVLRLSGALQVSRG) directs the protein to the mitochondrion. A 2Fe-2S ferredoxin-type domain is found at 42–135 (KKFAIYRWDP…VSKIYPLPHM (94 aa)). [2Fe-2S] cluster contacts are provided by Cys-95, Cys-100, Cys-103, and Cys-115. Residues 178 to 208 (DRDKLDGLYECILCACCSTSCPSYWWNADKY) enclose the 4Fe-4S ferredoxin-type domain. The [4Fe-4S] cluster site is built by Cys-188, Cys-191, and Cys-194. Cys-198 is a [3Fe-4S] cluster binding site. Position 203 (Trp-203) interacts with a ubiquinone. The [3Fe-4S] cluster site is built by Cys-245 and Cys-251. Cys-255 provides a ligand contact to [4Fe-4S] cluster.

It belongs to the succinate dehydrogenase/fumarate reductase iron-sulfur protein family. As to quaternary structure, component of complex II composed of four subunits: the flavoprotein (FP) sdha, iron-sulfur protein (IP) sdhb, and a cytochrome b composed of sdhc and sdhd. Requires [2Fe-2S] cluster as cofactor. [3Fe-4S] cluster serves as cofactor. [4Fe-4S] cluster is required as a cofactor.

The protein localises to the mitochondrion inner membrane. The catalysed reaction is a quinone + succinate = fumarate + a quinol. It carries out the reaction (R)-malate + a quinone = enol-oxaloacetate + a quinol. The enzyme catalyses (S)-malate + a quinone = enol-oxaloacetate + a quinol. It participates in carbohydrate metabolism; tricarboxylic acid cycle; fumarate from succinate (eukaryal route): step 1/1. With respect to regulation, enol-oxaloacetate inhibits the succinate dehydrogenase activity. Functionally, iron-sulfur protein (IP) subunit of the succinate dehydrogenase complex (mitochondrial respiratory chain complex II), responsible for transferring electrons from succinate to ubiquinone (coenzyme Q). SDH also oxidizes malate to the non-canonical enol form of oxaloacetate, enol-oxaloacetate. Enol-oxaloacetate, which is a potent inhibitor of the succinate dehydrogenase activity, is further isomerized into keto-oxaloacetate. The sequence is that of Succinate dehydrogenase [ubiquinone] iron-sulfur subunit, mitochondrial (sdhb) from Xenopus laevis (African clawed frog).